The primary structure comprises 453 residues: tRNA modification GTPase MnmE (453 aa).

Residues arginine 22, glutamate 79, and lysine 119 each coordinate (6S)-5-formyl-5,6,7,8-tetrahydrofolate. The TrmE-type G domain maps to 215-376 (GMKVVIAGRP…LKLHLKSLMG (162 aa)). Asparagine 225 serves as a coordination point for K(+). GTP-binding positions include 225-230 (NAGKSS), 244-250 (TEIAGTT), 269-272 (DTAG), and 334-337 (NKAD). Serine 229 provides a ligand contact to Mg(2+). K(+) is bound by residues threonine 244, isoleucine 246, and threonine 249. Mg(2+) is bound at residue threonine 250. Residue lysine 453 coordinates (6S)-5-formyl-5,6,7,8-tetrahydrofolate.

The protein belongs to the TRAFAC class TrmE-Era-EngA-EngB-Septin-like GTPase superfamily. TrmE GTPase family. Homodimer. Heterotetramer of two MnmE and two MnmG subunits. It depends on K(+) as a cofactor.

It is found in the cytoplasm. Its function is as follows. Exhibits a very high intrinsic GTPase hydrolysis rate. Involved in the addition of a carboxymethylaminomethyl (cmnm) group at the wobble position (U34) of certain tRNAs, forming tRNA-cmnm(5)s(2)U34. The sequence is that of tRNA modification GTPase MnmE from Shewanella putrefaciens (strain CN-32 / ATCC BAA-453).